A 120-amino-acid chain; its full sequence is Small cysteine and glycine repeat-containing protein 2 (120 aa).

The segment at 4–104 (CGCGGCGGCG…TCHSCGCGCG (101 aa)) is 19 X 2 AA repeats of CG.

Belongs to the KRTAP type 28 family.

Functionally, in the hair cortex, hair keratin intermediate filaments are embedded in an interfilamentous matrix, consisting of hair keratin-associated proteins (KRTAP), which are essential for the formation of a rigid and resistant hair shaft through their extensive disulfide bond cross-linking with abundant cysteine residues of hair keratins. The matrix proteins include the high-sulfur and high-glycine-tyrosine keratins. This is Small cysteine and glycine repeat-containing protein 2 from Homo sapiens (Human).